The primary structure comprises 408 residues: NADH-quinone oxidoreductase subunit D (408 aa).

The protein belongs to the complex I 49 kDa subunit family. In terms of assembly, NDH-1 is composed of 14 different subunits. Subunits NuoB, C, D, E, F, and G constitute the peripheral sector of the complex.

Its subcellular location is the cell inner membrane. The enzyme catalyses a quinone + NADH + 5 H(+)(in) = a quinol + NAD(+) + 4 H(+)(out). Functionally, NDH-1 shuttles electrons from NADH, via FMN and iron-sulfur (Fe-S) centers, to quinones in the respiratory chain. The immediate electron acceptor for the enzyme in this species is believed to be ubiquinone. Couples the redox reaction to proton translocation (for every two electrons transferred, four hydrogen ions are translocated across the cytoplasmic membrane), and thus conserves the redox energy in a proton gradient. The sequence is that of NADH-quinone oxidoreductase subunit D from Campylobacter jejuni subsp. doylei (strain ATCC BAA-1458 / RM4099 / 269.97).